Reading from the N-terminus, the 284-residue chain is 4-hydroxybenzoate octaprenyltransferase (284 aa).

The next 8 helical transmembrane spans lie at 16 to 36, 40 to 60, 91 to 111, 132 to 152, 157 to 177, 206 to 226, 231 to 251, and 259 to 279; these read PIGILLLLWPTLWALWLASDG, WTLLAIFTLGTILMRSAGCAI, LLVALALALLSFALIWPLNTL, FFAIPQAYLGIAFGFGIPMGF, NTVPAAAWWLLVANVFWAVAY, VAAVMFCYAVTLGLIFIVGWQ, TWFAAGMLIATGCAIYHYTLI, and CFAAFRHNNWLGAAIFGGVVL.

Belongs to the UbiA prenyltransferase family. The cofactor is Mg(2+).

The protein resides in the cell inner membrane. It catalyses the reaction all-trans-octaprenyl diphosphate + 4-hydroxybenzoate = 4-hydroxy-3-(all-trans-octaprenyl)benzoate + diphosphate. It participates in cofactor biosynthesis; ubiquinone biosynthesis. In terms of biological role, catalyzes the prenylation of para-hydroxybenzoate (PHB) with an all-trans polyprenyl group. Mediates the second step in the final reaction sequence of ubiquinone-8 (UQ-8) biosynthesis, which is the condensation of the polyisoprenoid side chain with PHB, generating the first membrane-bound Q intermediate 3-octaprenyl-4-hydroxybenzoate. The sequence is that of 4-hydroxybenzoate octaprenyltransferase from Herminiimonas arsenicoxydans.